Consider the following 117-residue polypeptide: Conotoxin vil14a (117 aa).

Positions 1-22 (MGFRVLVLVVMATTSALPFTFS) are cleaved as a signal peptide. Positions 23-90 (EEPGRSPFRP…FAETPVGQKR (68 aa)) are excised as a propeptide. Positions 53 to 86 (RADGQPPDMRQPEMRRPEMRRPEVRQPEFAETPV) are disordered. The segment covering 62–80 (RQPEMRRPEMRRPEVRQPE) has biased composition (basic and acidic residues). 2 disulfides stabilise this stretch: cysteine 96-cysteine 116 and cysteine 100-cysteine 112.

This sequence belongs to the conotoxin R superfamily. As to expression, expressed by the venom duct.

It is found in the secreted. This chain is Conotoxin vil14a, found in Conus villepinii (Villepin's cone).